The chain runs to 322 residues: Phosphatidylserine decarboxylase proenzyme (322 aa).

Active-site charge relay system; for autoendoproteolytic cleavage activity residues include D90, H147, and S254. S254 serves as the catalytic Schiff-base intermediate with substrate; via pyruvic acid; for decarboxylase activity. Residue S254 is modified to Pyruvic acid (Ser); by autocatalysis. The disordered stretch occupies residues 295–322 (VEPAPLPTEEIKAEHDASPLVDNKKDDT). Basic and acidic residues predominate over residues 303 to 322 (EEIKAEHDASPLVDNKKDDT).

It belongs to the phosphatidylserine decarboxylase family. PSD-B subfamily. Prokaryotic type I sub-subfamily. In terms of assembly, heterodimer of a large membrane-associated beta subunit and a small pyruvoyl-containing alpha subunit. Pyruvate is required as a cofactor. In terms of processing, is synthesized initially as an inactive proenzyme. Formation of the active enzyme involves a self-maturation process in which the active site pyruvoyl group is generated from an internal serine residue via an autocatalytic post-translational modification. Two non-identical subunits are generated from the proenzyme in this reaction, and the pyruvate is formed at the N-terminus of the alpha chain, which is derived from the carboxyl end of the proenzyme. The autoendoproteolytic cleavage occurs by a canonical serine protease mechanism, in which the side chain hydroxyl group of the serine supplies its oxygen atom to form the C-terminus of the beta chain, while the remainder of the serine residue undergoes an oxidative deamination to produce ammonia and the pyruvoyl prosthetic group on the alpha chain. During this reaction, the Ser that is part of the protease active site of the proenzyme becomes the pyruvoyl prosthetic group, which constitutes an essential element of the active site of the mature decarboxylase.

It localises to the cell membrane. It carries out the reaction a 1,2-diacyl-sn-glycero-3-phospho-L-serine + H(+) = a 1,2-diacyl-sn-glycero-3-phosphoethanolamine + CO2. The protein operates within phospholipid metabolism; phosphatidylethanolamine biosynthesis; phosphatidylethanolamine from CDP-diacylglycerol: step 2/2. In terms of biological role, catalyzes the formation of phosphatidylethanolamine (PtdEtn) from phosphatidylserine (PtdSer). The chain is Phosphatidylserine decarboxylase proenzyme from Salmonella agona (strain SL483).